Here is a 209-residue protein sequence, read N- to C-terminus: Large ribosomal subunit protein bL25 (209 aa).

This sequence belongs to the bacterial ribosomal protein bL25 family. CTC subfamily. In terms of assembly, part of the 50S ribosomal subunit; part of the 5S rRNA/L5/L18/L25 subcomplex. Contacts the 5S rRNA. Binds to the 5S rRNA independently of L5 and L18.

This is one of the proteins that binds to the 5S RNA in the ribosome where it forms part of the central protuberance. The polypeptide is Large ribosomal subunit protein bL25 (Xanthomonas campestris pv. campestris (strain 8004)).